The following is a 121-amino-acid chain: Large ribosomal subunit protein bL12 (121 aa).

This sequence belongs to the bacterial ribosomal protein bL12 family. Homodimer. Part of the ribosomal stalk of the 50S ribosomal subunit. Forms a multimeric L10(L12)X complex, where L10 forms an elongated spine to which 2 to 4 L12 dimers bind in a sequential fashion. Binds GTP-bound translation factors.

Functionally, forms part of the ribosomal stalk which helps the ribosome interact with GTP-bound translation factors. Is thus essential for accurate translation. The chain is Large ribosomal subunit protein bL12 from Pectobacterium atrosepticum (strain SCRI 1043 / ATCC BAA-672) (Erwinia carotovora subsp. atroseptica).